The sequence spans 423 residues: Growth hormone-releasing hormone receptor (423 aa).

An N-terminal signal peptide occupies residues 1-22 (MDSGVWAACIFCLLSSLPVALG). Residues 23 to 130 (HVHPECDFIT…DEKSYFSTVR (108 aa)) lie on the Extracellular side of the membrane. Disulfide bonds link Cys-41–Cys-64, Cys-55–Cys-96, and Cys-78–Cys-112. N-linked (GlcNAc...) asparagine glycosylation occurs at Asn-50. A helical transmembrane segment spans residues 131–151 (IVYTTGHSVSAVALFVAIAIL). The Cytoplasmic portion of the chain corresponds to 152-167 (VALRRLHCPRNYIHSQ). A helical transmembrane segment spans residues 168-188 (LFATFILKAGAVFLKDAALFH). Residues 189-210 (SENTDHCSFSTVLCKVSVATSH) are Extracellular-facing. A helical transmembrane segment spans residues 211-231 (FATMTNFSWLLAEAVYLTCLL). The Cytoplasmic segment spans residues 232–240 (ASTSPSTRR). A helical transmembrane segment spans residues 241 to 261 (AFWWLVLAGWGLPLLFTGTWV). Residues 262-283 (GCKLAFEDVACWDLDDSSPYWW) lie on the Extracellular side of the membrane. Residues 284–304 (IIKGPIVLSVGVNFGLFLNII) form a helical membrane-spanning segment. Residues 305–331 (RILLRKLEPAQGSLHTQPQYWRLSKST) lie on the Cytoplasmic side of the membrane. The helical transmembrane segment at 332–352 (LLLIPLFGIHYVIFNFLPDSA) threads the bilayer. At 353 to 357 (GLGIR) the chain is on the extracellular side. The chain crosses the membrane as a helical span at residues 358-378 (LPLELGLGSFQGFIVAILYCF). The Cytoplasmic segment spans residues 379 to 423 (LNQEVRTEISRRWHGHDPELLPAWRTHAKWAKPSRSRAKVLTTVC).

Belongs to the G-protein coupled receptor 2 family. As to expression, pituitary gland. Also detected in the lymphocytes and thymocytes.

Its subcellular location is the cell membrane. Its function is as follows. Receptor for GRF, coupled to G proteins which activate adenylyl cyclase. Stimulates somatotroph cell growth, growth hormone gene transcription and growth hormone secretion. The protein is Growth hormone-releasing hormone receptor (GHRHR) of Sus scrofa (Pig).